The sequence spans 275 residues: tRNA pseudouridine synthase B (275 aa).

Asp-38 serves as the catalytic Nucleophile.

Belongs to the pseudouridine synthase TruB family. Type 1 subfamily.

It catalyses the reaction uridine(55) in tRNA = pseudouridine(55) in tRNA. Its function is as follows. Responsible for synthesis of pseudouridine from uracil-55 in the psi GC loop of transfer RNAs. This Nitratiruptor sp. (strain SB155-2) protein is tRNA pseudouridine synthase B.